Here is a 297-residue protein sequence, read N- to C-terminus: MKRPDYRTLQALDAVIRERGFERAAQKLCITQSAVSQRIKQLENMFGQPLLVRTVPPRPTEQGQKLLALLRQVELLEEEWLGDEQTGSTPLLLSLAVNADSLATWLLPALAPVLADSPIRLNLQVEDETRTQERLRRGEVVGAVSIQHQALPSCLVDKLGALDYLFVSSKPFAEKYFPNGVTRSALLKAPVVAFDHLDDMHQAFLQQNFDLPPGSVPCHIVNSSEAFVQLARQGTTCCMIPHLQIEKELTSGELIDLTPGLFQRRMLYWHRFAPESRMMRKVTDALLDYGHKVLRQD.

In terms of domain architecture, HTH lysR-type spans Pro4–Thr60. The segment at residues Phe21–Lys40 is a DNA-binding region (H-T-H motif).

The protein belongs to the LysR transcriptional regulatory family. Homodimer.

In terms of biological role, controls the transcription of genes involved in arginine and lysine metabolism. The polypeptide is HTH-type transcriptional regulator ArgP (Escherichia coli O7:K1 (strain IAI39 / ExPEC)).